Here is a 268-residue protein sequence, read N- to C-terminus: L-gamma-glutamyl-L-propargylglycine hydroxylase (268 aa).

Fe(2+) is required as a cofactor.

It catalyses the reaction L-gamma-glutamyl-L-propargylglycine + 2-oxoglutarate + O2 = L-gamma-glutamyl-(3R)-L-beta-ethynylserine + succinate + CO2. Its pathway is amino-acid metabolism. It functions in the pathway antibiotic biosynthesis. Involved in the biosynthesis of terminal alkyne-containing amino acids such as L-beta-ethynylserine, that are produced as antibiotics by S.cattleya. Catalyzes the hydroxylation of the dipeptide L-gamma-glutamyl-L-propargylglycine, leading to L-gamma-glutamyl-L-beta-ethynylserine. Cannot use L-propargylglycine as substrate. In Streptantibioticus cattleyicolor (strain ATCC 35852 / DSM 46488 / JCM 4925 / NBRC 14057 / NRRL 8057) (Streptomyces cattleya), this protein is L-gamma-glutamyl-L-propargylglycine hydroxylase.